The primary structure comprises 786 residues: Sucrose synthase (786 aa).

A GT-B glycosyltransferase region spans residues 259 to 736 (MIFSLVVLSP…ALKRVEERYN (478 aa)).

The protein belongs to the glycosyltransferase 1 family. As to quaternary structure, homotetramer.

The enzyme catalyses an NDP-alpha-D-glucose + D-fructose = a ribonucleoside 5'-diphosphate + sucrose + H(+). Its function is as follows. Catalyzes the reversible conversion of sucrose and a nucleotide disphosphate (NDP) into fructose and NDP-glucose; although the reaction is freely reversible in vitro, the physiological reaction seems to be sucrose cleavage. Unlike characterized plant enzymes prefers ADP as a cosubstrate, whereas plants prefer UDP. Its preference for ADP over UDP suggests it may directly link sucrose and glycogen metabolism. The polypeptide is Sucrose synthase (Denitrovibrio acetiphilus (strain DSM 12809 / NBRC 114555 / N2460)).